Here is a 193-residue protein sequence, read N- to C-terminus: Rho-related protein racB (193 aa).

Positions 13, 15, 16, 17, 18, 32, 35, 60, 116, 118, and 159 each coordinate GTP. Position 17 (threonine 17) interacts with Mg(2+). 2 short sequence motifs (switch) span residues 26–37 (NAFPTEYVPTVF) and 57–75 (DTAG…YPQT). Threonine 35 serves as a coordination point for Mg(2+). The residue at position 190 (cysteine 190) is a Cysteine methyl ester. Residue cysteine 190 is the site of S-geranylgeranyl cysteine attachment. The propeptide at 191–193 (LIF) is removed in mature form.

The protein belongs to the small GTPase superfamily. Rho family. Mg(2+) is required as a cofactor.

The protein resides in the cell membrane. It localises to the cytoplasm. It is found in the cytoskeleton. It catalyses the reaction GTP + H2O = GDP + phosphate + H(+). With respect to regulation, regulated by guanine nucleotide exchange factors (GEFs) which promote the exchange of bound GDP for free GTP, GTPase activating proteins (GAPs) which increase the GTP hydrolysis activity, and GDP dissociation inhibitors which inhibit the dissociation of the nucleotide from the GTPase. Functionally, small GTPase which cycles between active GTP-bound and inactive GDP-bound states. The protein is Rho-related protein racB of Entamoeba histolytica (strain ATCC 30459 / HM-1:IMSS / ABRM).